The following is a 688-amino-acid chain: Beta-galactosidase BglY (688 aa).

Residue R118 participates in substrate binding. C122 provides a ligand contact to Zn(2+). N156 contributes to the substrate binding site. The Proton donor role is filled by E157. Zn(2+) is bound by residues C162, C164, and C167. E313 (nucleophile) is an active-site residue. Residues W321 and 361–364 (EKFH) contribute to the substrate site.

This sequence belongs to the glycosyl hydrolase 42 family.

It carries out the reaction Hydrolysis of terminal non-reducing beta-D-galactose residues in beta-D-galactosides.. With respect to regulation, ca(2+), Mg(2+) and EDTA have little effect on enzyme activity at 1-10 mM. Zn(2+) at 3, 5, 7 or 10 mM inhibits activity by 20%, 30%, 40% and 65%, respectively. Hydrolyzes o-nitrophenyl-beta-D-galactopyranoside (ONPG) and p-nitrophenyl-beta-D-fucopyranoside (PNPF), but not p-nitrophenyl-beta-D-glucopyranoside (PNPG), p-nitrophenyl-beta-D-xylopyranoside (PNPX) or p-nitrophenyl-beta-D-arabinopyranoside (PNPA). Also hydrolyzes lactose, including lactose in milk. This Alicyclobacillus acidocaldarius subsp. acidocaldarius (strain ATCC 27009 / DSM 446 / BCRC 14685 / JCM 5260 / KCTC 1825 / NBRC 15652 / NCIMB 11725 / NRRL B-14509 / 104-IA) (Bacillus acidocaldarius) protein is Beta-galactosidase BglY (bglY).